A 459-amino-acid chain; its full sequence is Bifunctional protein GlmU (459 aa).

Positions 1 to 229 (MLTQEIIIVI…YEEILGINNK (229 aa)) are pyrophosphorylase. UDP-N-acetyl-alpha-D-glucosamine is bound by residues 11–14 (LAAG), Lys-25, Gln-76, 81–82 (GT), 103–105 (YGD), Gly-140, Glu-154, and Asn-227. Asp-105 lines the Mg(2+) pocket. Asn-227 lines the Mg(2+) pocket. The linker stretch occupies residues 230–250 (LQLSNLEKIFQKKQINKLLIN). The segment at 251-459 (GVTIKDPSHF…MRSKKIIKKN (209 aa)) is N-acetyltransferase. Arg-333 and Lys-351 together coordinate UDP-N-acetyl-alpha-D-glucosamine. Residue His-363 is the Proton acceptor of the active site. UDP-N-acetyl-alpha-D-glucosamine contacts are provided by Tyr-366 and Asn-377. Residues Ala-380, 386–387 (NY), Ser-405, and Ala-423 contribute to the acetyl-CoA site.

The protein in the N-terminal section; belongs to the N-acetylglucosamine-1-phosphate uridyltransferase family. It in the C-terminal section; belongs to the transferase hexapeptide repeat family. In terms of assembly, homotrimer. Mg(2+) serves as cofactor.

It localises to the cytoplasm. It carries out the reaction alpha-D-glucosamine 1-phosphate + acetyl-CoA = N-acetyl-alpha-D-glucosamine 1-phosphate + CoA + H(+). It catalyses the reaction N-acetyl-alpha-D-glucosamine 1-phosphate + UTP + H(+) = UDP-N-acetyl-alpha-D-glucosamine + diphosphate. Its pathway is nucleotide-sugar biosynthesis; UDP-N-acetyl-alpha-D-glucosamine biosynthesis; N-acetyl-alpha-D-glucosamine 1-phosphate from alpha-D-glucosamine 6-phosphate (route II): step 2/2. It functions in the pathway nucleotide-sugar biosynthesis; UDP-N-acetyl-alpha-D-glucosamine biosynthesis; UDP-N-acetyl-alpha-D-glucosamine from N-acetyl-alpha-D-glucosamine 1-phosphate: step 1/1. It participates in bacterial outer membrane biogenesis; LPS lipid A biosynthesis. In terms of biological role, catalyzes the last two sequential reactions in the de novo biosynthetic pathway for UDP-N-acetylglucosamine (UDP-GlcNAc). The C-terminal domain catalyzes the transfer of acetyl group from acetyl coenzyme A to glucosamine-1-phosphate (GlcN-1-P) to produce N-acetylglucosamine-1-phosphate (GlcNAc-1-P), which is converted into UDP-GlcNAc by the transfer of uridine 5-monophosphate (from uridine 5-triphosphate), a reaction catalyzed by the N-terminal domain. This chain is Bifunctional protein GlmU, found in Buchnera aphidicola subsp. Acyrthosiphon pisum (strain 5A).